A 2877-amino-acid polypeptide reads, in one-letter code: Desmoplakin (2877 aa).

Positions 1–20 (MSCNGGSHPRINTLGRMTRA) are disordered. Residues 1–591 (MSCNGGSHPR…DYMKTIEDLE (591 aa)) are interaction with PKP1, JUP, PKP2. The tract at residues 1 to 1063 (MSCNGGSHPR…ANSENCNKNK (1063 aa)) is globular 1. Residues S22 and S62 each carry the phosphoserine modification. Y65 carries the phosphotyrosine modification. T70 bears the Phosphothreonine mark. 3 positions are modified to phosphoserine: S174, S175, and S183. 2 Spectrin repeats span residues 185-278 (SGWD…HLRQ) and 279-382 (LQNI…LKEN). A Spectrin 3a repeat occupies 383–453 (AAYFQFFEEA…NLVNKSKKIV (71 aa)). In terms of domain architecture, SH3 spans 465 to 522 (NKPIILRALCDYKQDQKIVHKGDECILKDNNERSKWYVTGPGGVDMLVPSVGLIIPPP). Residues 523–552 (NPLAVDLSCKIEQYYEAILALWNQLYINMK) form a Spectrin 3b repeat. 3 Spectrin repeats span residues 553-634 (SLVS…IQLP), 661-776 (VIET…SLCS), and 777-890 (VRAL…DLEK). Coiled coils occupy residues 1034–1280 (LKLK…AEEN), 1313–1354 (NARH…YENE), 1395–1443 (TSGY…QKAS), and 1473–1926 (KQSL…KLED). The tract at residues 1064-1952 (FLDQNLQKYQ…QKEIDKLRQR (889 aa)) is central fibrous rod domain. S1665, S1715, and S2031 each carry phosphoserine. Positions 1953–2877 (PYGSHRETQT…YSFSSSSIGY (925 aa)) are globular 2. The 4.5 X 38 AA tandem repeats (Domain A) stretch occupies residues 1967-2215 (TVDSSKLVFD…LLLSVQKRSM (249 aa)). 17 Plectin repeats span residues 2016–2052 (QPFL…PEST), 2053–2090 (VMLL…FDDR), 2091–2128 (QQIY…RETG), 2129–2166 (MRLL…RDLY), 2170–2204 (NDPR…PHTG), 2205–2240 (LLLL…PSTV), 2258–2295 (KDFL…PGTA), 2296–2333 (LELL…IEFK), 2334–2371 (EKLL…KGHG), 2372–2409 (IRLL…EELS), 2413–2447 (SDPS…EETG), 2463–2500 (SQKN…YETF), 2514–2551 (TITG…RKFF), 2617–2654 (SDPL…SITG), 2655–2692 (QRLL…QDMA), 2731–2768 (QRFL…GRAA), and 2769–2806 (QRLQ…DITG). A phosphoserine mark is found at S2214, S2216, and S2232. Residues 2251–2453 (DEVGERIKDF…EETGLCLLPL (203 aa)) form a 4.5 X 38 AA tandem repeats (Domain B) region. The LRR 15 repeat unit spans residues 2603–2628 (ISSVRNLTIRSSSLSDPLEESSPIAA). Residues 2616 to 2828 (LSDPLEESSP…GLPSPYNMSA (213 aa)) form a 4.5 X 38 AA tandem repeats (Domain C) region. A phosphoserine mark is found at S2817 and S2822. The interval 2817–2877 (SKGLPSPYNM…YSFSSSSIGY (61 aa)) is disordered. Phosphotyrosine is present on Y2824. Phosphoserine occurs at positions 2827 and 2831. Residues 2830–2853 (GSRSGSRSGSRSGSRSGSRSGSRR) are 6 X 4 AA tandem repeats of G-S-R-[SR]. Positions 2830 to 2853 (GSRSGSRSGSRSGSRSGSRSGSRR) are enriched in low complexity. 2 positions are modified to omega-N-methylarginine: R2832 and R2853. Phosphoserine is present on S2855. T2859 is subject to Phosphothreonine. A compositionally biased stretch (low complexity) spans 2862–2877 (SSYSYSYSFSSSSIGY). S2874 carries the post-translational modification Phosphoserine.

This sequence belongs to the plakin or cytolinker family. Homodimer. Interacts with COL17A1 (via cytoplasmic region). Interacts with DSC2. Interacts with PKP1. Interacts with PKP2. Interacts weakly with TMEM65. Post-translationally, phosphorylation at Ser-2855 increases association with intermediate filament cytokeratin, potentially facilitating interaction between desmosome junctions and intermediate filament architecture. As to expression, expressed in cardiomyocytes (at protein level).

It is found in the cell junction. The protein resides in the desmosome. The protein localises to the cell membrane. Its subcellular location is the cytoplasm. Its function is as follows. Major high molecular weight protein of desmosomes. Regulates profibrotic gene expression in cardiomyocytes via activation of the MAPK14/p38 MAPK signaling cascade and increase in TGFB1 protein abundance. This chain is Desmoplakin, found in Rattus norvegicus (Rat).